Consider the following 279-residue polypeptide: 4-diphosphocytidyl-2-C-methyl-D-erythritol kinase (279 aa).

Lysine 10 is an active-site residue. ATP is bound at residue 91-101; the sequence is PVASGIGGGSA. Aspartate 130 is a catalytic residue.

It belongs to the GHMP kinase family. IspE subfamily.

The catalysed reaction is 4-CDP-2-C-methyl-D-erythritol + ATP = 4-CDP-2-C-methyl-D-erythritol 2-phosphate + ADP + H(+). It participates in isoprenoid biosynthesis; isopentenyl diphosphate biosynthesis via DXP pathway; isopentenyl diphosphate from 1-deoxy-D-xylulose 5-phosphate: step 3/6. Its function is as follows. Catalyzes the phosphorylation of the position 2 hydroxy group of 4-diphosphocytidyl-2C-methyl-D-erythritol. This is 4-diphosphocytidyl-2-C-methyl-D-erythritol kinase from Ruegeria pomeroyi (strain ATCC 700808 / DSM 15171 / DSS-3) (Silicibacter pomeroyi).